The chain runs to 261 residues: Taurine import ATP-binding protein TauB (261 aa).

Residues 4–233 (LTADRVSVRY…RWRAGDSARA (230 aa)) enclose the ABC transporter domain. 38 to 45 (GPSGCGKT) is an ATP binding site.

The protein belongs to the ABC transporter superfamily. Taurine importer (TC 3.A.1.17.1) family. As to quaternary structure, the complex is composed of two ATP-binding proteins (TauB), two transmembrane proteins (TauC) and a solute-binding protein (TauA).

The protein localises to the cell inner membrane. The enzyme catalyses taurine(out) + ATP + H2O = taurine(in) + ADP + phosphate + H(+). Functionally, part of the ABC transporter complex TauABC involved in taurine import. Responsible for energy coupling to the transport system. This Chromobacterium violaceum (strain ATCC 12472 / DSM 30191 / JCM 1249 / CCUG 213 / NBRC 12614 / NCIMB 9131 / NCTC 9757 / MK) protein is Taurine import ATP-binding protein TauB.